The following is a 72-amino-acid chain: Translation initiation factor IF-1 (72 aa).

Residues methionine 1–lysine 72 form the S1-like domain.

The protein belongs to the IF-1 family. Component of the 30S ribosomal translation pre-initiation complex which assembles on the 30S ribosome in the order IF-2 and IF-3, IF-1 and N-formylmethionyl-tRNA(fMet); mRNA recruitment can occur at any time during PIC assembly.

The protein resides in the cytoplasm. Functionally, one of the essential components for the initiation of protein synthesis. Stabilizes the binding of IF-2 and IF-3 on the 30S subunit to which N-formylmethionyl-tRNA(fMet) subsequently binds. Helps modulate mRNA selection, yielding the 30S pre-initiation complex (PIC). Upon addition of the 50S ribosomal subunit IF-1, IF-2 and IF-3 are released leaving the mature 70S translation initiation complex. The sequence is that of Translation initiation factor IF-1 from Paracoccus denitrificans (strain Pd 1222).